The following is a 98-amino-acid chain: Large ribosomal subunit protein uL23 (98 aa).

This sequence belongs to the universal ribosomal protein uL23 family. As to quaternary structure, part of the 50S ribosomal subunit. Contacts protein L29, and trigger factor when it is bound to the ribosome.

One of the early assembly proteins it binds 23S rRNA. One of the proteins that surrounds the polypeptide exit tunnel on the outside of the ribosome. Forms the main docking site for trigger factor binding to the ribosome. This Clostridium acetobutylicum (strain ATCC 824 / DSM 792 / JCM 1419 / IAM 19013 / LMG 5710 / NBRC 13948 / NRRL B-527 / VKM B-1787 / 2291 / W) protein is Large ribosomal subunit protein uL23.